Reading from the N-terminus, the 505-residue chain is Histidine--tRNA ligase, mitochondrial (505 aa).

The transit peptide at 1–31 (MPHLGPLRRRAWAALLGQLLRPPSTVCTRGC) directs the protein to the mitochondrion. Phosphoserine is present on serine 66. Residues 130–132 (DLT), arginine 157, glutamine 173, aspartate 177, arginine 326, and 330–331 (YY) contribute to the L-histidine site. Position 443 is an N6-acetyllysine (lysine 443).

This sequence belongs to the class-II aminoacyl-tRNA synthetase family. Homodimer.

It localises to the mitochondrion. It carries out the reaction tRNA(His) + L-histidine + ATP = L-histidyl-tRNA(His) + AMP + diphosphate + H(+). Functionally, mitochondrial aminoacyl-tRNA synthetase that catalyzes the ATP-dependent ligation of histidine to the 3'-end of its cognate tRNA, via the formation of an aminoacyl-adenylate intermediate (His-AMP). The sequence is that of Histidine--tRNA ligase, mitochondrial (Hars2) from Mus musculus (Mouse).